The following is a 285-amino-acid chain: Elongation factor Ts (285 aa).

The interval 82–85 (TDFV) is involved in Mg(2+) ion dislocation from EF-Tu.

It belongs to the EF-Ts family.

It localises to the cytoplasm. Its function is as follows. Associates with the EF-Tu.GDP complex and induces the exchange of GDP to GTP. It remains bound to the aminoacyl-tRNA.EF-Tu.GTP complex up to the GTP hydrolysis stage on the ribosome. This chain is Elongation factor Ts, found in Sodalis glossinidius (strain morsitans).